The sequence spans 374 residues: DNA/RNA-binding protein ALBA4 (374 aa).

This sequence belongs to the histone-like Alba family.

Its subcellular location is the cytoplasm. The protein resides in the cell cortex. It is found in the perinuclear region. Possesses DNA- and RNA-binding activities. Binds to DNA with relaxed sequence specificity. May associate with the subtelomeric TARE6 repeats. Regulates the abundance of transcript sub-populations in a stage-specific manner. Regulates activation of male gametocytes. Participates in the coordination of sporozoite development in the oocyst. This Plasmodium yoelii yoelii protein is DNA/RNA-binding protein ALBA4.